Here is a 314-residue protein sequence, read N- to C-terminus: MGERGPDQWLEQIKNCISLSESDMKQLCELVKELLMEESNIQPVQSPVTVCGDIHGQFHDLLELFRTAGGLPSDDNQTNFIFLGDYVDRGYFSLETFTLLMVLKVKYPHRITLVRGNHESRQITQVYGFYEECLTKYGSTTVWKYCCQVFDFLTLAAIIDGKILCVHGGLSPEIRMLDQIRVLSRAQEVPHEGGFCDLVWSDPDNIDTWAVSPRGAGWLFGSKVSREFNHINNLQLIARAHQLVMEGFRYHFKEKDVVTVWSAPNYCYRCGNVASVMQVDEDLEPNFKIFSAVQDGDLSVKNNANKQQRSDYFL.

Mn(2+) contacts are provided by aspartate 53, histidine 55, aspartate 85, and asparagine 117. Catalysis depends on histidine 118, which acts as the Proton donor. Mn(2+) is bound by residues histidine 167 and histidine 241.

Belongs to the PPP phosphatase family. PP-6 (PP-V) subfamily. As to quaternary structure, interacts with MDS3. Mn(2+) serves as cofactor.

The protein localises to the cytoplasm. The enzyme catalyses O-phospho-L-seryl-[protein] + H2O = L-seryl-[protein] + phosphate. It catalyses the reaction O-phospho-L-threonyl-[protein] + H2O = L-threonyl-[protein] + phosphate. Functionally, serine/threonine protein phosphatase which is involved in the dephosphorylation of the large subunit of RNA polymerase II. Is required in late G1 for normal G1 cyclin expression, bud initiation and expression of certain genes that are periodically expressed during late G1. Plays a role during hyphal growth through the regulation of cell wall biogenesis, osmosensing and protein translation. Involved in virulence in a mouse systemic infection model. This is Serine/threonine-protein phosphatase SIT4 (SIT4) from Candida albicans (strain SC5314 / ATCC MYA-2876) (Yeast).